A 638-amino-acid polypeptide reads, in one-letter code: Bifunctional protein glk (638 aa).

Positions 1 to 20 are disordered; sequence MSTGVQTKAAPGAGQHADGP. Positions 1–341 are glucokinase; the sequence is MSTGVQTKAA…QLSNRAGGSS (341 aa). 24-29 is an ATP binding site; it reads ADIGGT. The 77-residue stretch at 342–418 folds into the HTH rpiR-type domain; sequence SAVFERIRQM…LKLATGLTGT (77 aa). The tract at residues 342-638 is putative HTH-type transcriptional regulator; sequence SAVFERIRQM…SHGAASSARD (297 aa). Positions 378 to 397 form a DNA-binding region, H-T-H motif; that stretch reads IVDIARKADVSQPTVIRFCR. Residues 462-601 form the SIS domain; that stretch reads AIDLLNGARR…AVGVAIRRAV (140 aa).

It in the N-terminal section; belongs to the bacterial glucokinase family.

The protein localises to the cytoplasm. The enzyme catalyses D-glucose + ATP = D-glucose 6-phosphate + ADP + H(+). This Paraburkholderia xenovorans (strain LB400) protein is Bifunctional protein glk (glk).